Reading from the N-terminus, the 1392-residue chain is ATP-dependent helicase/nuclease subunit A (1392 aa).

Positions 3-489 (NPKWTPAQQA…IDLNQNFRSR (487 aa)) constitute a UvrD-like helicase ATP-binding domain. Residue 24–31 (AAAGSGKT) coordinates ATP. Disordered stretches follow at residues 291-319 (RGSK…KARD), 556-594 (RGAE…LEEA), and 1051-1126 (GPVQ…LDTK). 2 stretches are compositionally biased toward basic and acidic residues: residues 305–319 (ENSK…KARD) and 569–583 (AKGE…REPE). In terms of domain architecture, UvrD-like helicase C-terminal spans 556 to 886 (RGAEDAATGA…RFITVHSSKG (331 aa)). The segment covering 584-594 (SGDDESSLEEA) has biased composition (acidic residues). Basic and acidic residues predominate over residues 1088 to 1113 (ASGKTEIPGETKNSEETKTSEDKKNL).

It belongs to the helicase family. AddA subfamily. As to quaternary structure, heterodimer of AddA and AddB/RexB. Mg(2+) is required as a cofactor.

It catalyses the reaction Couples ATP hydrolysis with the unwinding of duplex DNA by translocating in the 3'-5' direction.. It carries out the reaction ATP + H2O = ADP + phosphate + H(+). Its function is as follows. The heterodimer acts as both an ATP-dependent DNA helicase and an ATP-dependent, dual-direction single-stranded exonuclease. Recognizes the chi site generating a DNA molecule suitable for the initiation of homologous recombination. The AddA nuclease domain is required for chi fragment generation; this subunit has the helicase and 3' -&gt; 5' nuclease activities. The sequence is that of ATP-dependent helicase/nuclease subunit A from Desulfitobacterium hafniense (strain Y51).